A 610-amino-acid polypeptide reads, in one-letter code: Fimbrin (610 aa).

2 consecutive EF-hand domains span residues 7–42 (SEISEFKASFNQFDENGDGQISALELQKILTKCGEK) and 43–78 (VTGVEVRDMIKEVDTDGNGSIDFKEFLQVMQKARQH). Asp20, Asn22, Asp24, Gln26, Glu31, Asp56, Asp58, Asn60, Ser62, and Glu67 together coordinate Ca(2+). Actin-binding regions lie at residues 102–365 (YSGS…NTHP) and 366–608 (ALEP…QVEM). Calponin-homology (CH) domains follow at residues 116–232 (DEEK…KIGL), 260–365 (LPVE…NTHP), 379–488 (TREE…RGHV), and 501–608 (PIAD…QVEM).

Binds to actin. The chain is Fimbrin (fimA) from Dictyostelium discoideum (Social amoeba).